Here is a 401-residue protein sequence, read N- to C-terminus: MWSSSSSLCRNPSFRRAWLSTVTVTQTAAPTSSRLAALRTQLATEEASIDDFSSTNAPTTTTHYTSSNGSPIVRQKAAPRSAKILPKPRWLKAAPATSDNYRKLRDTVRELGLATVCEEARCPNIGECWGGGEDQTATATIMIMGDTCTRGCRFCSVKTSRAPPPLDPHEPEKVATAIAQWGLDYVVLTSVDRDDLPDQGADHFRQVVTQLKLKKPSLLVEALTPDFQGNMDLVHAVATSGLDVYAHNMETVEALTPKVRDRRATYRQSLEVLRYVKTIQSDPIGTTNNHNNNNGCLTKTSLMLGLGETDDQVLTTLRDLRDADVDVVTFGQYLQPTKKHLPVQEYVTPEKFDFWQETAMGMGFAYVASGPLVRSSYKAGELFLQKYIAQKKQRNAEVAAA.

The N-terminal 25 residues, 1–25 (MWSSSSSLCRNPSFRRAWLSTVTVT), are a transit peptide targeting the mitochondrion. A disordered region spans residues 49-79 (IDDFSSTNAPTTTTHYTSSNGSPIVRQKAAP). A compositionally biased stretch (polar residues) spans 51 to 70 (DFSSTNAPTTTTHYTSSNGS). [4Fe-4S] cluster contacts are provided by C117, C122, C128, C148, C152, C155, and S376. Positions 133-365 (EDQTATATIM…QETAMGMGFA (233 aa)) constitute a Radical SAM core domain.

The protein belongs to the radical SAM superfamily. Lipoyl synthase family. [4Fe-4S] cluster serves as cofactor.

It localises to the mitochondrion. It carries out the reaction [[Fe-S] cluster scaffold protein carrying a second [4Fe-4S](2+) cluster] + N(6)-octanoyl-L-lysyl-[protein] + 2 oxidized [2Fe-2S]-[ferredoxin] + 2 S-adenosyl-L-methionine + 4 H(+) = [[Fe-S] cluster scaffold protein] + N(6)-[(R)-dihydrolipoyl]-L-lysyl-[protein] + 4 Fe(3+) + 2 hydrogen sulfide + 2 5'-deoxyadenosine + 2 L-methionine + 2 reduced [2Fe-2S]-[ferredoxin]. Its pathway is protein modification; protein lipoylation via endogenous pathway; protein N(6)-(lipoyl)lysine from octanoyl-[acyl-carrier-protein]: step 2/2. Functionally, catalyzes the radical-mediated insertion of two sulfur atoms into the C-6 and C-8 positions of the octanoyl moiety bound to the lipoyl domains of lipoate-dependent enzymes, thereby converting the octanoylated domains into lipoylated derivatives. The protein is Lipoyl synthase 1, mitochondrial of Phaeodactylum tricornutum (strain CCAP 1055/1).